The primary structure comprises 62 residues: Amolopin-P1 (62 aa).

The signal sequence occupies residues 1-22 (MFPMKKSLLLLFFFGPISLSFC). Residues 23-44 (DQERGADEEENGGEVTEQEVKR) constitute a propeptide that is removed on maturation.

Expressed by the skin glands.

The protein localises to the secreted. Its function is as follows. Antimicrobial peptide with activity against Gram-positive bacteria. Has been tested against S.aureus (MIC=37.5 ug/mL), against B.pumilus (MIC=75.0 ug/mL), B.cereus (no activity detected). Does not show activity against Gram-negative bacteria (E.coli, B.dysenteriae, A.calcoaceticus, P.aeruginosa) and fungi (C.albicans). Does not show hemolytic activity against rabbit erythrocytes. This is Amolopin-P1 from Amolops loloensis (Lolokou Sucker Frog).